A 189-amino-acid polypeptide reads, in one-letter code: Probable nicotinate-nucleotide adenylyltransferase (189 aa).

Belongs to the NadD family.

The catalysed reaction is nicotinate beta-D-ribonucleotide + ATP + H(+) = deamido-NAD(+) + diphosphate. Its pathway is cofactor biosynthesis; NAD(+) biosynthesis; deamido-NAD(+) from nicotinate D-ribonucleotide: step 1/1. Its function is as follows. Catalyzes the reversible adenylation of nicotinate mononucleotide (NaMN) to nicotinic acid adenine dinucleotide (NaAD). This is Probable nicotinate-nucleotide adenylyltransferase from Staphylococcus aureus (strain N315).